Reading from the N-terminus, the 300-residue chain is Ribosomal RNA small subunit methyltransferase H (300 aa).

S-adenosyl-L-methionine-binding positions include 38–40 (GGH), glutamate 55, isoleucine 85, aspartate 102, and histidine 109.

Belongs to the methyltransferase superfamily. RsmH family.

Its subcellular location is the cytoplasm. It catalyses the reaction cytidine(1402) in 16S rRNA + S-adenosyl-L-methionine = N(4)-methylcytidine(1402) in 16S rRNA + S-adenosyl-L-homocysteine + H(+). Specifically methylates the N4 position of cytidine in position 1402 (C1402) of 16S rRNA. In Brachyspira hyodysenteriae (strain ATCC 49526 / WA1), this protein is Ribosomal RNA small subunit methyltransferase H.